Reading from the N-terminus, the 102-residue chain is uncharacterized protein (102 aa).

The segment covering 1 to 13 has biased composition (low complexity); it reads PSSSQALSVPSLS. The disordered stretch occupies residues 1–24; that stretch reads PSSSQALSVPSLSSEKKTASPTCV.

This is an uncharacterized protein from Human cytomegalovirus (strain AD169) (HHV-5).